Here is a 523-residue protein sequence, read N- to C-terminus: Coatomer subunit delta-2 (523 aa).

Residues Asp218–Leu243 form a disordered region. An MHD domain is found at Ser282 to Val523.

It belongs to the adaptor complexes medium subunit family. Delta-COP subfamily. In terms of assembly, oligomeric complex that consists of at least the alpha, beta, beta', gamma, delta, epsilon and zeta subunits.

It is found in the cytoplasm. It localises to the golgi apparatus membrane. The protein resides in the cytoplasmic vesicle. Its subcellular location is the COPI-coated vesicle membrane. In terms of biological role, the coatomer is a cytosolic protein complex that binds to dilysine motifs and reversibly associates with Golgi non-clathrin-coated vesicles, which further mediate biosynthetic protein transport from the ER, via the Golgi up to the trans Golgi network. Coatomer complex is required for budding from Golgi membranes, and is essential for the retrograde Golgi-to-ER transport of dilysine-tagged proteins. In Oryza sativa subsp. japonica (Rice), this protein is Coatomer subunit delta-2.